A 270-amino-acid chain; its full sequence is Phosphonoacetaldehyde hydrolase (270 aa).

Asp-11 functions as the Nucleophile in the catalytic mechanism. 2 residues coordinate Mg(2+): Asp-11 and Ala-13. The Schiff-base intermediate with substrate role is filled by Lys-53. Asp-187 is a binding site for Mg(2+).

It belongs to the HAD-like hydrolase superfamily. PhnX family. Homodimer. It depends on Mg(2+) as a cofactor.

The enzyme catalyses phosphonoacetaldehyde + H2O = acetaldehyde + phosphate + H(+). Involved in phosphonate degradation. This Salmonella gallinarum (strain 287/91 / NCTC 13346) protein is Phosphonoacetaldehyde hydrolase.